The primary structure comprises 66 residues: U1-theraphotoxin-Cg1d 1 (66 aa).

The first 21 residues, Met1–Ala21, serve as a signal peptide directing secretion. Positions Ala22–Arg29 are excised as a propeptide. 3 disulfides stabilise this stretch: Cys31–Cys46, Cys38–Cys51, and Cys45–Cys58. Position 63 is a proline amide (Pro63).

This sequence belongs to the neurotoxin 10 (Hwtx-1) family. 46 (Jztx-7/10/12) subfamily. In terms of tissue distribution, expressed by the venom gland.

The protein localises to the secreted. Probable ion channel inhibitor. This Chilobrachys guangxiensis (Chinese earth tiger tarantula) protein is U1-theraphotoxin-Cg1d 1.